The chain runs to 599 residues: Elongation factor 4 (599 aa).

The tr-type G domain occupies Lys-4–Lys-186. Residues Asp-16–Thr-21 and Asn-133–Asp-136 each bind GTP.

Belongs to the TRAFAC class translation factor GTPase superfamily. Classic translation factor GTPase family. LepA subfamily.

Its subcellular location is the cell inner membrane. It carries out the reaction GTP + H2O = GDP + phosphate + H(+). In terms of biological role, required for accurate and efficient protein synthesis under certain stress conditions. May act as a fidelity factor of the translation reaction, by catalyzing a one-codon backward translocation of tRNAs on improperly translocated ribosomes. Back-translocation proceeds from a post-translocation (POST) complex to a pre-translocation (PRE) complex, thus giving elongation factor G a second chance to translocate the tRNAs correctly. Binds to ribosomes in a GTP-dependent manner. This Bdellovibrio bacteriovorus (strain ATCC 15356 / DSM 50701 / NCIMB 9529 / HD100) protein is Elongation factor 4.